The sequence spans 144 residues: Large ribosomal subunit protein uL15 (144 aa).

Residues 1–53 (MRLNTLSPAEGAKHSAKRLGRGIGSGLGKTGGRGHKGQKSRTGGGVRRGFEGG) are disordered. Residues 21–31 (RGIGSGLGKTG) are compositionally biased toward gly residues.

This sequence belongs to the universal ribosomal protein uL15 family. Part of the 50S ribosomal subunit.

Binds to the 23S rRNA. This chain is Large ribosomal subunit protein uL15, found in Haemophilus influenzae (strain ATCC 51907 / DSM 11121 / KW20 / Rd).